A 328-amino-acid chain; its full sequence is 5,10-methylenetetrahydromethanopterin reductase (328 aa).

It belongs to the mer family.

The protein localises to the cytoplasm. It carries out the reaction 5-methyl-5,6,7,8-tetrahydromethanopterin + oxidized coenzyme F420-(gamma-L-Glu)(n) + H(+) = 5,10-methylenetetrahydromethanopterin + reduced coenzyme F420-(gamma-L-Glu)(n). It functions in the pathway one-carbon metabolism; methanogenesis from CO(2); methyl-coenzyme M from 5,10-methylene-5,6,7,8-tetrahydromethanopterin: step 1/2. Functionally, catalyzes the reversible reduction of methylene-H(4)MPT to methyl-H(4)MPT. The chain is 5,10-methylenetetrahydromethanopterin reductase from Methanosarcina barkeri (strain Fusaro / DSM 804).